Here is a 783-residue protein sequence, read N- to C-terminus: Zinc finger protein 107 (783 aa).

A C2H2-type 1; atypical zinc finger spans residues 76–98 (FQCNKYVKVFDKFSNSNRYKRRH). 3 C2H2-type zinc fingers span residues 104-126 (FKCK…RRIH), 132-154 (YKCE…KRIH), and 160-182 (YKCE…KIIH). Residue K186 forms a Glycyl lysine isopeptide (Lys-Gly) (interchain with G-Cter in SUMO2) linkage. The C2H2-type 5 zinc finger occupies 188–210 (NKCEECGKAFKQASHLTIHKIIH). The C2H2-type 6; atypical zinc-finger motif lies at 216-238 (YKYEECGKVFSQSSHLTTQKILH). Residues 244–266 (YKCKECGKAFNLFSNLTNHKRIH) form a C2H2-type 7 zinc finger. Residues 272–294 (YKCKECGRAFNISSNLNKQEKIH) form a C2H2-type 8; atypical zinc finger. Residues 300 to 322 (NKCEECDKAFNRSLKLTAHKKIL) form a C2H2-type 9; atypical zinc finger. 2 consecutive C2H2-type zinc fingers follow at residues 328–350 (YKCE…KIIH) and 356–378 (YKCK…KKIH). The C2H2-type 12; atypical zinc finger occupies 384 to 406 (YKCEECGKAFNQHSNLINHRKIY). 4 C2H2-type zinc fingers span residues 412 to 434 (YKCE…KKIH), 440 to 462 (YKCE…KKIH), 468 to 490 (YKCE…KRIH), and 496 to 518 (YKCE…KIVH). The C2H2-type 17; atypical zinc-finger motif lies at 524 to 546 (NKCEEFGKAFKQSSHRTIHKIIH). Residues 552-574 (YKCEEHGKVFNQSSNLTTQKIIH) form a C2H2-type 18; atypical zinc finger. The C2H2-type 19; atypical zinc-finger motif lies at 580–602 (YKFEEHGKAFNLFSNITNHKIIY). 5 C2H2-type zinc fingers span residues 608–630 (HKCE…KRIH), 636–658 (YQCA…KIIH), 664–686 (YKCK…KKIH), 692–714 (YKCE…KKIH), and 720–742 (YKCE…KIIH). The C2H2-type 25; atypical zinc-finger motif lies at 748-770 (YKCGDYGRAFNLSSNLTTHKKIH).

Belongs to the krueppel C2H2-type zinc-finger protein family. In terms of tissue distribution, expressed in brain, heart, skeletal muscle, kidney and pancreas. Weakly expressed in aorta, liver and lung.

Its subcellular location is the nucleus. Functionally, may be involved in transcriptional regulation. The chain is Zinc finger protein 107 (ZNF107) from Homo sapiens (Human).